The sequence spans 349 residues: MAELLAIKWDDNRDKLILLDQTILPNKIEYIEYDTAEDVYDSIKDMIVRGAPAIGVTAAYGLYFAAKVAPEDNFKNFFKYLKEKSAYLDSSRPTAVNLSWALKIMESKALENKDKDVKEIKSILREEAKRIHEEDIEICKAIGENLVTLLKDGVGILTHCNAGQLATSKYGTATSPMYLAKEKGWNFKVYSDETRPRLQGSTLTALELYEAGIDVTTITDNMAAMVMSQGKIDAVIVGCDRIAANGDTANKIGTMGVSILAKYFGIPMYIAAPTPSIDIDTKTGKDIPIEERNPEEVTSRFGVWTAPRGVKVYNPGFDVTPHENITAIVTEKGIVYPPFEENLKKLFEK.

Substrate is bound by residues 49-51 (RGA), arginine 92, and glutamine 199. Residue aspartate 240 is the Proton donor of the active site. 250–251 (NK) serves as a coordination point for substrate.

This sequence belongs to the EIF-2B alpha/beta/delta subunits family. DrdI subfamily.

The catalysed reaction is 5-deoxy-alpha-D-ribose 1-phosphate = 5-deoxy-D-ribulose 1-phosphate. It participates in carbohydrate degradation. Catalyzes the isomerization of 5-deoxy-alpha-D-ribose 1-phosphate to 5-deoxy-D-ribulose 1-phosphate, as part of a 5-deoxyribose salvage pathway that recycles this toxic radical SAM enzyme by-product to mainstream metabolites. This Clostridium botulinum (strain Loch Maree / Type A3) protein is 5-deoxyribose 1-phosphate isomerase.